Here is an 801-residue protein sequence, read N- to C-terminus: Xaa-Pro dipeptidyl-peptidase (801 aa).

Catalysis depends on charge relay system residues Ser-371, Asp-491, and His-522.

This sequence belongs to the peptidase S15 family. As to quaternary structure, homodimer.

The protein resides in the cytoplasm. The catalysed reaction is Hydrolyzes Xaa-Pro-|- bonds to release unblocked, N-terminal dipeptides from substrates including Ala-Pro-|-p-nitroanilide and (sequentially) Tyr-Pro-|-Phe-Pro-|-Gly-Pro-|-Ile.. In terms of biological role, removes N-terminal dipeptides sequentially from polypeptides having unsubstituted N-termini provided that the penultimate residue is proline. The protein is Xaa-Pro dipeptidyl-peptidase of Ligilactobacillus salivarius (strain UCC118) (Lactobacillus salivarius).